A 757-amino-acid chain; its full sequence is Xaa-Pro dipeptidyl-peptidase (757 aa).

Active-site charge relay system residues include Ser348, Asp468, and His498.

The protein belongs to the peptidase S15 family. Homodimer.

The protein resides in the cytoplasm. The enzyme catalyses Hydrolyzes Xaa-Pro-|- bonds to release unblocked, N-terminal dipeptides from substrates including Ala-Pro-|-p-nitroanilide and (sequentially) Tyr-Pro-|-Phe-Pro-|-Gly-Pro-|-Ile.. Removes N-terminal dipeptides sequentially from polypeptides having unsubstituted N-termini provided that the penultimate residue is proline. The polypeptide is Xaa-Pro dipeptidyl-peptidase (Streptococcus pneumoniae (strain ATCC 700669 / Spain 23F-1)).